A 551-amino-acid chain; its full sequence is Arginine--tRNA ligase (551 aa).

The short motif at 125 to 135 (ANPTGPLHIGH) is the 'HIGH' region element.

The protein belongs to the class-I aminoacyl-tRNA synthetase family. Monomer.

It is found in the cytoplasm. It carries out the reaction tRNA(Arg) + L-arginine + ATP = L-arginyl-tRNA(Arg) + AMP + diphosphate. The chain is Arginine--tRNA ligase from Nitratidesulfovibrio vulgaris (strain DSM 19637 / Miyazaki F) (Desulfovibrio vulgaris).